The chain runs to 463 residues: Ataxin-10 homolog (463 aa).

It belongs to the ataxin-10 family.

It is found in the cytoplasm. May play a role in the regulation of cytokinesis. This is Ataxin-10 homolog (CTR86) from Candida albicans (strain SC5314 / ATCC MYA-2876) (Yeast).